A 265-amino-acid polypeptide reads, in one-letter code: MPQVTMRQMLEAGVHFGHQTRYWNPKMAPYIFGARGKIHIINLEKTVPLFNDAMNFLSSVAQKRGTVLFLGTKRSARESIKEEAERCNMPFMTQRWLGGTLTNFRTVKQSVARLKELEAAETDGTFDKLVKHEVLGLRREREKLDASLGGIKEMNRLPDAIFVIDIGHEDIAIKEAKKLGIPVIAVVDTNYDPALVDYAIPGNDDAIRAVQLYARAAADAVLEGKAAAPNSASVREEEFSAESADEGKGRRAPAKKGDKKADAAE.

Positions 226-265 (AAAPNSASVREEEFSAESADEGKGRRAPAKKGDKKADAAE) are disordered. Over residues 245–265 (DEGKGRRAPAKKGDKKADAAE) the composition is skewed to basic and acidic residues.

Belongs to the universal ribosomal protein uS2 family.

This chain is Small ribosomal subunit protein uS2, found in Xanthomonas euvesicatoria pv. vesicatoria (strain 85-10) (Xanthomonas campestris pv. vesicatoria).